The following is a 311-amino-acid chain: Ribosomal RNA small subunit methyltransferase H (311 aa).

Residues glycine 33–histidine 35, aspartate 53, phenylalanine 77, aspartate 98, and glutamine 105 contribute to the S-adenosyl-L-methionine site.

This sequence belongs to the methyltransferase superfamily. RsmH family.

It is found in the cytoplasm. The enzyme catalyses cytidine(1402) in 16S rRNA + S-adenosyl-L-methionine = N(4)-methylcytidine(1402) in 16S rRNA + S-adenosyl-L-homocysteine + H(+). In terms of biological role, specifically methylates the N4 position of cytidine in position 1402 (C1402) of 16S rRNA. This Thiobacillus denitrificans (strain ATCC 25259 / T1) protein is Ribosomal RNA small subunit methyltransferase H.